We begin with the raw amino-acid sequence, 526 residues long: MHMETVFRKSTHGGVVKQDIKIKASEEGFVEDINDLKVEKERKSIHNEDDNSKSSQQKDLTGDKKDDQLESAKADMEEVMEENQRLKKHLDKIMKDYRNLQMQFHEVAQRDAEKTNTDVKHDEAELVSLSLGRTSSDTKKELSKLILSKKENDEKEEDNLTLALDCKFQSSTKSSPSNLSPENSLGEVKDDEKGTDQTWPPHKVLKTIRNEEDDVTQQNPTKRAKVSVRVRCDTPTMNDGCQWRKYGQKIAKGNPCPRAYYRCTVAPNCPVRKQVQRCIQDMSILITTYEGTHNHPLPHSATSMAFTTSAAASMLLSGSSSSGSGPTSSTASATTSALNYCFSDNSKPNPFYNLPHSSISSSSHSQYPTITLDLTSNSSTSSFPGQNYRTIANSNNYPPRYNNNNSSTNILNFSSFESNHLLPMSWSNRNNQDTHSQSYLQNNIKSAASTQTLLPQDTIAAATKAITSDPKFQSALAVALTSIIGSRSGNHHIDEKSGQNMKVTEPFPVLCSFPSTSPGDHKDYTL.

Composition is skewed to basic and acidic residues over residues 40-52 (KERKSIHNEDDNS) and 60-76 (LTGDKKDDQLESAKADM). 2 disordered regions span residues 40–76 (KERKSIHNEDDNSKSSQQKDLTGDKKDDQLESAKADM) and 170–200 (SSTKSSPSNLSPENSLGEVKDDEKGTDQTWP). A coiled-coil region spans residues 62–106 (GDKKDDQLESAKADMEEVMEENQRLKKHLDKIMKDYRNLQMQFHE). The segment covering 170 to 185 (SSTKSSPSNLSPENSL) has biased composition (low complexity). Residues 232–298 (CDTPTMNDGC…YEGTHNHPLP (67 aa)) constitute a DNA-binding region (WRKY).

Belongs to the WRKY group II-b family. In terms of tissue distribution, expressed in roots, trichomes and fruits.

It is found in the nucleus. Functionally, transcription activator involved in the transcriptional regulation of terpene biosynthesis in glandular trichomes. Binds to the promoter of the linalool synthase TPS5 and promotes TPS5 gene transactivation. In association with WRKY72B, contributes to basal defense against root-knot nematodes (RKNs) and potato aphids, as well as Mi-1-mediated gene-for-gene resistance to these pests. Both WRKY72A and WRKY72B are not required for gene-for-gene resistance mediated by Pto, another tomato R gene. The protein is WRKY transcription factor 72A of Solanum lycopersicum (Tomato).